Reading from the N-terminus, the 505-residue chain is T-cell activation inhibitor, mitochondrial (505 aa).

Residues 216-243 (LKNSLPLRKELDRLKNELSELLQLSDIR) adopt a coiled-coil conformation.

In terms of tissue distribution, expressed in peripheral blood leukocytes, mainly in T-lymphocytes.

The protein localises to the mitochondrion. Functionally, may regulate T-cell apoptosis. The polypeptide is T-cell activation inhibitor, mitochondrial (Tcaim) (Rattus norvegicus (Rat)).